A 99-amino-acid chain; its full sequence is Integration host factor subunit alpha (99 aa).

The protein belongs to the bacterial histone-like protein family. Heterodimer of an alpha and a beta chain.

Functionally, this protein is one of the two subunits of integration host factor, a specific DNA-binding protein that functions in genetic recombination as well as in transcriptional and translational control. In Xanthomonas axonopodis pv. citri (strain 306), this protein is Integration host factor subunit alpha (ihfA).